The chain runs to 303 residues: UDP-3-O-acyl-N-acetylglucosamine deacetylase (303 aa).

Zn(2+) is bound by residues H78, H237, and D241. The Proton donor role is filled by H264.

Belongs to the LpxC family. It depends on Zn(2+) as a cofactor.

It carries out the reaction a UDP-3-O-[(3R)-3-hydroxyacyl]-N-acetyl-alpha-D-glucosamine + H2O = a UDP-3-O-[(3R)-3-hydroxyacyl]-alpha-D-glucosamine + acetate. Its pathway is glycolipid biosynthesis; lipid IV(A) biosynthesis; lipid IV(A) from (3R)-3-hydroxytetradecanoyl-[acyl-carrier-protein] and UDP-N-acetyl-alpha-D-glucosamine: step 2/6. In terms of biological role, catalyzes the hydrolysis of UDP-3-O-myristoyl-N-acetylglucosamine to form UDP-3-O-myristoylglucosamine and acetate, the committed step in lipid A biosynthesis. This Stenotrophomonas maltophilia (strain K279a) protein is UDP-3-O-acyl-N-acetylglucosamine deacetylase.